The primary structure comprises 200 residues: MTNRTASLRRETSESGIELSLDLDGTGASEIHTSVPFYDHLLTAFAKHSLTDLRVRASGDTEIDVHHTVEDVGIVLGQAIRQALGDKAGLSRYGDALVPLDEALVQAVVDLSGRPYLVHAGEPSGFEFHLIGGHFTGSMVRHVFEAISFNAAITTHVTVVGGRDPHHIAEAEFKAFARAFRQAKAYDPLVSGIPSTKGAL.

It belongs to the imidazoleglycerol-phosphate dehydratase family.

Its subcellular location is the cytoplasm. It carries out the reaction D-erythro-1-(imidazol-4-yl)glycerol 3-phosphate = 3-(imidazol-4-yl)-2-oxopropyl phosphate + H2O. It functions in the pathway amino-acid biosynthesis; L-histidine biosynthesis; L-histidine from 5-phospho-alpha-D-ribose 1-diphosphate: step 6/9. The chain is Imidazoleglycerol-phosphate dehydratase from Leifsonia xyli subsp. xyli (strain CTCB07).